The primary structure comprises 95 residues: MTITKAKIAAMLSSKLGFSNHLCEEIVHTVFSNILEIAKAQKLTLKNFGSFEVKQKNPRPGINFHTKALVIIESKKHLRFVPSSKLKALINESTR.

The protein belongs to the bacterial histone-like protein family.

The sequence is that of Histone-like DNA-binding protein from Rickettsia rickettsii.